Reading from the N-terminus, the 152-residue chain is Transcriptional regulator MraZ (152 aa).

2 consecutive SpoVT-AbrB domains span residues 5 to 52 and 81 to 124; these read ATQI…TLSE and ASEC…DEQA.

This sequence belongs to the MraZ family. As to quaternary structure, forms oligomers.

It localises to the cytoplasm. The protein resides in the nucleoid. Its function is as follows. Negatively regulates its own expression and that of the subsequent genes in the proximal part of the division and cell wall (dcw) gene cluster. Acts by binding directly to DNA. May also regulate the expression of genes outside the dcw cluster. The chain is Transcriptional regulator MraZ from Photorhabdus laumondii subsp. laumondii (strain DSM 15139 / CIP 105565 / TT01) (Photorhabdus luminescens subsp. laumondii).